Here is a 297-residue protein sequence, read N- to C-terminus: Pyrroline-5-carboxylate reductase 1 (297 aa).

This sequence belongs to the pyrroline-5-carboxylate reductase family.

It is found in the cytoplasm. It catalyses the reaction L-proline + NADP(+) = (S)-1-pyrroline-5-carboxylate + NADPH + 2 H(+). It carries out the reaction L-proline + NAD(+) = (S)-1-pyrroline-5-carboxylate + NADH + 2 H(+). Its pathway is amino-acid biosynthesis; L-proline biosynthesis; L-proline from L-glutamate 5-semialdehyde: step 1/1. Its function is as follows. Catalyzes the reduction of 1-pyrroline-5-carboxylate (PCA) to L-proline. The polypeptide is Pyrroline-5-carboxylate reductase 1 (proH) (Bacillus spizizenii (strain ATCC 23059 / NRRL B-14472 / W23) (Bacillus subtilis subsp. spizizenii)).